The primary structure comprises 248 residues: tRNA (guanine-N(1)-)-methyltransferase (248 aa).

Residues G117 and 137–142 (LGDFVL) contribute to the S-adenosyl-L-methionine site.

Belongs to the RNA methyltransferase TrmD family. In terms of assembly, homodimer.

The protein resides in the cytoplasm. The catalysed reaction is guanosine(37) in tRNA + S-adenosyl-L-methionine = N(1)-methylguanosine(37) in tRNA + S-adenosyl-L-homocysteine + H(+). Specifically methylates guanosine-37 in various tRNAs. The polypeptide is tRNA (guanine-N(1)-)-methyltransferase (Herminiimonas arsenicoxydans).